Reading from the N-terminus, the 180-residue chain is Major urinary protein 6 (180 aa).

The signal sequence occupies residues 1–18; the sequence is MKMLLLLCLGLTLVCVHA. An intrachain disulfide couples Cys82 to Cys175.

Belongs to the calycin superfamily. Lipocalin family. In terms of tissue distribution, abundant in the urine of adult male mice but absent from that of females.

It is found in the secreted. Binds pheromones that are released from drying urine of males. These pheromones affect the sexual behavior of females. In Mus musculus (Mouse), this protein is Major urinary protein 6 (Mup6).